We begin with the raw amino-acid sequence, 1132 residues long: Protein sel-1 homolog 3 (1132 aa).

The tract at residues 1–24 is disordered; that stretch reads MQRRGAGLGWPRQQQQQPPPLAVG. Residues asparagine 201, asparagine 382, and asparagine 527 are each glycosylated (N-linked (GlcNAc...) asparagine). 7 Sel1-like repeats span residues 575 to 609, 611 to 647, 694 to 730, 732 to 767, 768 to 800, 801 to 839, and 840 to 877; these read YLAV…RLSS, NLGY…DQHT, RLAQ…PALI, DYAI…QAVN, GLGW…DASY, NLGV…EGTL, and WCSL…LGHV. Serine 608 carries the post-translational modification Phosphoserine. Asparagine 937 carries an N-linked (GlcNAc...) asparagine glycan. One copy of the Sel1-like 8 repeat lies at 952–988; it reads KMGDLYYYGHQNQSQDLELSVQMYAQAALDGDSQGFF. The helical transmembrane segment at 1057–1077 threads the bilayer; the sequence is ILHSALIYFLGTFLLSILIAW. The segment at 1087–1132 is disordered; sequence ASDPPPRPSQASPDTATSTASPAVTPAADASDQDQPTVTNNPEPRG. Residues 1097-1116 are compositionally biased toward low complexity; it reads ASPDTATSTASPAVTPAADA. Residues 1119–1132 show a composition bias toward polar residues; it reads QDQPTVTNNPEPRG.

It localises to the membrane. The protein is Protein sel-1 homolog 3 (SEL1L3) of Homo sapiens (Human).